The primary structure comprises 249 residues: Cyclin-dependent kinase inhibitor 2 (249 aa).

The tract at residues 118 to 180 is disordered; sequence KVCTQAGEDH…MCRRSSTTSA (63 aa). The span at 161 to 180 shows a compositional bias: polar residues; that stretch reads AESNQEAKQQMCRRSSTTSA.

It belongs to the CDI family. ICK/KRP subfamily.

This Oryza sativa subsp. japonica (Rice) protein is Cyclin-dependent kinase inhibitor 2 (KRP2).